The primary structure comprises 232 residues: Large ribosomal subunit protein uL1 (232 aa).

It belongs to the universal ribosomal protein uL1 family. As to quaternary structure, part of the 50S ribosomal subunit.

Functionally, binds directly to 23S rRNA. The L1 stalk is quite mobile in the ribosome, and is involved in E site tRNA release. In terms of biological role, protein L1 is also a translational repressor protein, it controls the translation of the L11 operon by binding to its mRNA. In Chlamydia caviae (strain ATCC VR-813 / DSM 19441 / 03DC25 / GPIC) (Chlamydophila caviae), this protein is Large ribosomal subunit protein uL1.